The following is a 70-amino-acid chain: MNNSMINPSIVDLLKRVEDRYSLVILSAKRARQIIDGAETFVDVESNKPLTIAINEIDEGFVNYKDTEEK.

It belongs to the RNA polymerase subunit omega family. As to quaternary structure, the RNAP catalytic core consists of 2 alpha, 1 beta, 1 beta' and 1 omega subunit. When a sigma factor is associated with the core the holoenzyme is formed, which can initiate transcription.

It catalyses the reaction RNA(n) + a ribonucleoside 5'-triphosphate = RNA(n+1) + diphosphate. Its function is as follows. Promotes RNA polymerase assembly. Latches the N- and C-terminal regions of the beta' subunit thereby facilitating its interaction with the beta and alpha subunits. The sequence is that of DNA-directed RNA polymerase subunit omega from Clostridium perfringens (strain ATCC 13124 / DSM 756 / JCM 1290 / NCIMB 6125 / NCTC 8237 / Type A).